A 506-amino-acid polypeptide reads, in one-letter code: Aminoaldehyde dehydrogenase 2 (506 aa).

D101 serves as a coordination point for Na(+). NAD(+)-binding positions include 161-163 (TPW) and 187-190 (KPSE). L191 provides a ligand contact to Na(+). NAD(+)-binding positions include 241–244 (STET) and E262. Residue E262 is the Proton acceptor of the active site. Residue C297 is the Nucleophile of the active site. NAD(+) contacts are provided by E396 and W462.

Belongs to the aldehyde dehydrogenase family.

It catalyses the reaction 4-aminobutanal + NAD(+) + H2O = 4-aminobutanoate + NADH + 2 H(+). The enzyme catalyses 3-aminopropanal + NAD(+) + H2O = beta-alanine + NADH + 2 H(+). It carries out the reaction 4-(trimethylamino)butanal + NAD(+) + H2O = 4-(trimethylamino)butanoate + NADH + 2 H(+). The catalysed reaction is 4-guanidinobutanal + NAD(+) + H2O = 4-guanidinobutanoate + NADH + 2 H(+). Its pathway is amine and polyamine biosynthesis; betaine biosynthesis via choline pathway; betaine from betaine aldehyde: step 1/1. Its function is as follows. Dehydrogenase that catalyzes the oxidation of several aminoaldehydes. Metabolizes and detoxifies aldehyde products of polyamine degradation to non-toxic amino acids. Catalyzes the oxidation of 4-aminobutanal and 3-aminopropanal to 4-aminobutanoate and beta-alanine, respectively. Catalyzes the oxidation of 4-(trimethylamino)butanal and 4-guanidinobutanal to 4-trimethylammoniobutanoate and 4-guanidinobutanoate, respectively. This is Aminoaldehyde dehydrogenase 2 from Zea mays (Maize).